We begin with the raw amino-acid sequence, 72 residues long: Translation initiation factor IF-1 2 (72 aa).

The S1-like domain occupies M1–K72.

The protein belongs to the IF-1 family. As to quaternary structure, component of the 30S ribosomal translation pre-initiation complex which assembles on the 30S ribosome in the order IF-2 and IF-3, IF-1 and N-formylmethionyl-tRNA(fMet); mRNA recruitment can occur at any time during PIC assembly.

Its subcellular location is the cytoplasm. One of the essential components for the initiation of protein synthesis. Stabilizes the binding of IF-2 and IF-3 on the 30S subunit to which N-formylmethionyl-tRNA(fMet) subsequently binds. Helps modulate mRNA selection, yielding the 30S pre-initiation complex (PIC). Upon addition of the 50S ribosomal subunit IF-1, IF-2 and IF-3 are released leaving the mature 70S translation initiation complex. In Cupriavidus metallidurans (strain ATCC 43123 / DSM 2839 / NBRC 102507 / CH34) (Ralstonia metallidurans), this protein is Translation initiation factor IF-1 2.